The chain runs to 428 residues: Adenylosuccinate synthetase (428 aa).

Residues 13–19 (GDEGKGK) and 41–43 (GHT) contribute to the GTP site. Residue Asp14 is the Proton acceptor of the active site. Mg(2+) contacts are provided by Asp14 and Gly41. IMP-binding positions include 14 to 17 (DEGK), 39 to 42 (NAGH), Thr130, Arg144, Gln223, Thr238, and Arg302. The active-site Proton donor is His42. 298 to 304 (ASTGRRR) contributes to the substrate binding site. Residues Arg304, 330–332 (KLD), and 412–414 (STG) contribute to the GTP site.

Belongs to the adenylosuccinate synthetase family. As to quaternary structure, homodimer. Mg(2+) serves as cofactor.

It localises to the cytoplasm. It carries out the reaction IMP + L-aspartate + GTP = N(6)-(1,2-dicarboxyethyl)-AMP + GDP + phosphate + 2 H(+). It functions in the pathway purine metabolism; AMP biosynthesis via de novo pathway; AMP from IMP: step 1/2. Its function is as follows. Plays an important role in the de novo pathway of purine nucleotide biosynthesis. Catalyzes the first committed step in the biosynthesis of AMP from IMP. The sequence is that of Adenylosuccinate synthetase from Dichelobacter nodosus (strain VCS1703A).